A 47-amino-acid polypeptide reads, in one-letter code: uncharacterized protein (47 aa).

Positions M1–A18 are cleaved as a signal peptide. Residues E28–Q47 form a disordered region.

This is an uncharacterized protein from Haemophilus influenzae (strain ATCC 51907 / DSM 11121 / KW20 / Rd).